The following is a 309-amino-acid chain: UPF0282 protein Saci_0277 (309 aa).

The protein belongs to the UPF0282 family.

This chain is UPF0282 protein Saci_0277, found in Sulfolobus acidocaldarius (strain ATCC 33909 / DSM 639 / JCM 8929 / NBRC 15157 / NCIMB 11770).